The following is a 59-amino-acid chain: Large ribosomal subunit protein uL30 (59 aa).

Belongs to the universal ribosomal protein uL30 family. In terms of assembly, part of the 50S ribosomal subunit.

The polypeptide is Large ribosomal subunit protein uL30 (Clostridium botulinum (strain ATCC 19397 / Type A)).